The following is a 263-amino-acid chain: Shikimate dehydrogenase (NADP(+)) (263 aa).

Residues 14 to 16 (SLS) and T60 contribute to the shikimate site. K64 serves as the catalytic Proton acceptor. Residues N85 and D100 each coordinate shikimate. NADP(+) is bound by residues 123–127 (GAGGA), 146–151 (NRTPQR), and L205. A shikimate-binding site is contributed by Y207. G228 serves as a coordination point for NADP(+). Q235 lines the shikimate pocket.

This sequence belongs to the shikimate dehydrogenase family. Homodimer.

It carries out the reaction shikimate + NADP(+) = 3-dehydroshikimate + NADPH + H(+). It functions in the pathway metabolic intermediate biosynthesis; chorismate biosynthesis; chorismate from D-erythrose 4-phosphate and phosphoenolpyruvate: step 4/7. Functionally, involved in the biosynthesis of the chorismate, which leads to the biosynthesis of aromatic amino acids. Catalyzes the reversible NADPH linked reduction of 3-dehydroshikimate (DHSA) to yield shikimate (SA). The sequence is that of Shikimate dehydrogenase (NADP(+)) from Thermus thermophilus (strain ATCC 27634 / DSM 579 / HB8).